A 444-amino-acid polypeptide reads, in one-letter code: Probable D-serine dehydratase (444 aa).

Lys-110 is modified (N6-(pyridoxal phosphate)lysine).

Belongs to the serine/threonine dehydratase family. DsdA subfamily. Pyridoxal 5'-phosphate serves as cofactor.

It carries out the reaction D-serine = pyruvate + NH4(+). This chain is Probable D-serine dehydratase, found in Burkholderia thailandensis (strain ATCC 700388 / DSM 13276 / CCUG 48851 / CIP 106301 / E264).